Reading from the N-terminus, the 29-residue chain is Cyclotide mech-7 (29 aa).

The cyclopeptide (Gly-Asp) cross-link spans 1–29 (GIPICGETCTIGTCNTPGCTCSWPVCTRD). Cystine bridges form between cysteine 5-cysteine 19, cysteine 9-cysteine 21, and cysteine 14-cysteine 26.

In terms of processing, this is a cyclic peptide. Contains 3 disulfide bonds.

In terms of biological role, probably participates in a plant defense mechanism (Potential). Binds to and induces leakage in phospholipd membranes, particularly ones containing 1-palmitoyl-2-oleophosphatidylethanolamine (POPE). The sequence is that of Cyclotide mech-7 from Melicytus chathamicus (Chatham Island mahoe).